Here is a 336-residue protein sequence, read N- to C-terminus: Tetraacyldisaccharide 4'-kinase (336 aa).

Residue 60–67 (TAGGNGKT) participates in ATP binding.

The protein belongs to the LpxK family.

It catalyses the reaction a lipid A disaccharide + ATP = a lipid IVA + ADP + H(+). Its pathway is glycolipid biosynthesis; lipid IV(A) biosynthesis; lipid IV(A) from (3R)-3-hydroxytetradecanoyl-[acyl-carrier-protein] and UDP-N-acetyl-alpha-D-glucosamine: step 6/6. Functionally, transfers the gamma-phosphate of ATP to the 4'-position of a tetraacyldisaccharide 1-phosphate intermediate (termed DS-1-P) to form tetraacyldisaccharide 1,4'-bis-phosphate (lipid IVA). The polypeptide is Tetraacyldisaccharide 4'-kinase (Vibrio cholerae serotype O1 (strain ATCC 39315 / El Tor Inaba N16961)).